The following is a 280-amino-acid chain: 4-deoxy-L-threo-5-hexosulose-uronate ketol-isomerase 1 (280 aa).

Zn(2+) is bound by residues histidine 198, histidine 200, glutamate 205, and histidine 247.

The protein belongs to the KduI family. It depends on Zn(2+) as a cofactor.

It carries out the reaction 5-dehydro-4-deoxy-D-glucuronate = 3-deoxy-D-glycero-2,5-hexodiulosonate. It functions in the pathway glycan metabolism; pectin degradation; 2-dehydro-3-deoxy-D-gluconate from pectin: step 4/5. Catalyzes the isomerization of 5-dehydro-4-deoxy-D-glucuronate to 3-deoxy-D-glycero-2,5-hexodiulosonate. In Bacteroides thetaiotaomicron (strain ATCC 29148 / DSM 2079 / JCM 5827 / CCUG 10774 / NCTC 10582 / VPI-5482 / E50), this protein is 4-deoxy-L-threo-5-hexosulose-uronate ketol-isomerase 1 (kduI1).